Reading from the N-terminus, the 595-residue chain is Chaperone protein HscA homolog (595 aa).

This sequence belongs to the heat shock protein 70 family.

Chaperone involved in the maturation of iron-sulfur cluster-containing proteins. Has a low intrinsic ATPase activity which is markedly stimulated by HscB. This is Chaperone protein HscA homolog from Rickettsia peacockii (strain Rustic).